We begin with the raw amino-acid sequence, 255 residues long: tRNA (guanine-N(1)-)-methyltransferase (255 aa).

Residues G117 and 137–142 each bind S-adenosyl-L-methionine; that span reads LGDFVL.

Belongs to the RNA methyltransferase TrmD family. Homodimer.

The protein resides in the cytoplasm. The catalysed reaction is guanosine(37) in tRNA + S-adenosyl-L-methionine = N(1)-methylguanosine(37) in tRNA + S-adenosyl-L-homocysteine + H(+). Functionally, specifically methylates guanosine-37 in various tRNAs. This chain is tRNA (guanine-N(1)-)-methyltransferase, found in Paraburkholderia xenovorans (strain LB400).